We begin with the raw amino-acid sequence, 170 residues long: NADH-quinone oxidoreductase subunit B (170 aa).

[4Fe-4S] cluster contacts are provided by cysteine 37, cysteine 38, cysteine 102, and cysteine 131.

The protein belongs to the complex I 20 kDa subunit family. As to quaternary structure, NDH-1 is composed of 14 different subunits. Subunits NuoB, C, D, E, F, and G constitute the peripheral sector of the complex. Requires [4Fe-4S] cluster as cofactor.

The protein localises to the cell inner membrane. The catalysed reaction is a quinone + NADH + 5 H(+)(in) = a quinol + NAD(+) + 4 H(+)(out). NDH-1 shuttles electrons from NADH, via FMN and iron-sulfur (Fe-S) centers, to quinones in the respiratory chain. The immediate electron acceptor for the enzyme in this species is believed to be ubiquinone. Couples the redox reaction to proton translocation (for every two electrons transferred, four hydrogen ions are translocated across the cytoplasmic membrane), and thus conserves the redox energy in a proton gradient. The polypeptide is NADH-quinone oxidoreductase subunit B (Geobacter sulfurreducens (strain ATCC 51573 / DSM 12127 / PCA)).